The primary structure comprises 106 residues: MTYIIYAFAAVFEIAGCFAFWAWLKLEKPAWWLAPGMISLALFAWLLTLVPSDAAGRTFAAYGGIYILASLSWLWLIEGRVPDRYDIGGGLICLAGASVILFAPRA.

4 helical membrane passes run 4 to 24 (IIYA…WAWL), 30 to 50 (AWWL…LTLV), 59 to 79 (FAAY…LIEG), and 86 to 106 (DIGG…APRA).

Belongs to the UPF0060 family.

It is found in the cell inner membrane. The polypeptide is UPF0060 membrane protein RHE_CH01408 (Rhizobium etli (strain ATCC 51251 / DSM 11541 / JCM 21823 / NBRC 15573 / CFN 42)).